We begin with the raw amino-acid sequence, 549 residues long: Hydroxylamine reductase (549 aa).

[2Fe-2S] cluster is bound by residues C3, C6, C18, and C25. 8 residues coordinate hybrid [4Fe-2O-2S] cluster: H248, E272, C316, C404, C432, C457, E491, and K493. Position 404 is a cysteine persulfide (C404).

This sequence belongs to the HCP family. [2Fe-2S] cluster serves as cofactor. The cofactor is hybrid [4Fe-2O-2S] cluster.

It is found in the cytoplasm. The catalysed reaction is A + NH4(+) + H2O = hydroxylamine + AH2 + H(+). Its function is as follows. Catalyzes the reduction of hydroxylamine to form NH(3) and H(2)O. The protein is Hydroxylamine reductase of Aeromonas hydrophila subsp. hydrophila (strain ATCC 7966 / DSM 30187 / BCRC 13018 / CCUG 14551 / JCM 1027 / KCTC 2358 / NCIMB 9240 / NCTC 8049).